We begin with the raw amino-acid sequence, 208 residues long: Adenylyl-sulfate kinase (208 aa).

Residue 35 to 42 (GLSGSGKS) coordinates ATP. The active-site Phosphoserine intermediate is Ser-109.

The protein belongs to the APS kinase family.

The enzyme catalyses adenosine 5'-phosphosulfate + ATP = 3'-phosphoadenylyl sulfate + ADP + H(+). It functions in the pathway sulfur metabolism; hydrogen sulfide biosynthesis; sulfite from sulfate: step 2/3. Functionally, catalyzes the synthesis of activated sulfate. The polypeptide is Adenylyl-sulfate kinase (Geotalea uraniireducens (strain Rf4) (Geobacter uraniireducens)).